The sequence spans 372 residues: DNA primase small subunit PriS (372 aa).

Active-site residues include D95, D97, and D280.

It belongs to the eukaryotic-type primase small subunit family. As to quaternary structure, heterodimer of a small subunit (PriS) and a large subunit (PriL). Mg(2+) serves as cofactor. The cofactor is Mn(2+).

Its function is as follows. Catalytic subunit of DNA primase, an RNA polymerase that catalyzes the synthesis of short RNA molecules used as primers for DNA polymerase during DNA replication. The small subunit contains the primase catalytic core and has DNA synthesis activity on its own. Binding to the large subunit stabilizes and modulates the activity, increasing the rate of DNA synthesis while decreasing the length of the DNA fragments, and conferring RNA synthesis capability. The DNA polymerase activity may enable DNA primase to also catalyze primer extension after primer synthesis. May also play a role in DNA repair. The polypeptide is DNA primase small subunit PriS (Cenarchaeum symbiosum (strain A)).